The primary structure comprises 120 residues: Cu-Zn superoxide dismutase-like protein OPG175 (120 aa).

An intrachain disulfide couples Cys52 to Cys102.

Belongs to the Cu-Zn superoxide dismutase family.

It localises to the virion. It is found in the host cytoplasm. In terms of biological role, superoxide dismutase-like protein with no enzymatic activity. The protein is Cu-Zn superoxide dismutase-like protein OPG175 (OPG175) of Vaccinia virus (strain Tashkent) (VACV).